The following is a 74-amino-acid chain: uncharacterized protein (74 aa).

The first 19 residues, 1–19 (MIGLIVVPILFAIKGIVVG), serve as a signal peptide directing secretion. The disordered stretch occupies residues 26–74 (KFGKHSNTKDQKEDKDEDKRQSISQRKQHTEWPIEENRIQRRAPNQSAL). Basic and acidic residues-rich tracts occupy residues 32 to 46 (NTKD…DKRQ) and 53 to 64 (QHTEWPIEENRI).

This is an uncharacterized protein from Saccharomyces cerevisiae (strain ATCC 204508 / S288c) (Baker's yeast).